A 284-amino-acid chain; its full sequence is uncharacterized protein (284 aa).

N-linked (GlcNAc...) asparagine; by host glycans are attached at residues asparagine 79, asparagine 102, asparagine 111, asparagine 147, asparagine 162, asparagine 174, asparagine 196, asparagine 211, asparagine 228, and asparagine 234. Residues 239–259 (AFTYGSWGVAMLLFAAVMVLV) traverse the membrane as a helical segment.

Belongs to the RL11 family.

It is found in the membrane. This is an uncharacterized protein from Human cytomegalovirus (strain AD169) (HHV-5).